An 819-amino-acid polypeptide reads, in one-letter code: Leucine--tRNA ligase (819 aa).

The short motif at P41–H51 is the 'HIGH' region element. A 'KMSKS' region motif is present at residues K578–S582. ATP is bound at residue K581.

Belongs to the class-I aminoacyl-tRNA synthetase family.

The protein localises to the cytoplasm. The catalysed reaction is tRNA(Leu) + L-leucine + ATP = L-leucyl-tRNA(Leu) + AMP + diphosphate. The sequence is that of Leucine--tRNA ligase from Fervidobacterium nodosum (strain ATCC 35602 / DSM 5306 / Rt17-B1).